The primary structure comprises 131 residues: Large ribosomal subunit protein bL17 (131 aa).

It belongs to the bacterial ribosomal protein bL17 family. As to quaternary structure, part of the 50S ribosomal subunit. Contacts protein L32.

The polypeptide is Large ribosomal subunit protein bL17 (Sodalis glossinidius (strain morsitans)).